The following is a 257-amino-acid chain: ATP synthase subunit a (257 aa).

The propeptide at 1–4 (MFIT) is removed in mature form. Transmembrane regions (helical) follow at residues 27-47 (FSNF…LAII), 58-78 (IVPQ…LNLV), 93-113 (YFPF…LRLI), 122-142 (QLIF…ILGL), 149-169 (VFGL…LVLI), 189-209 (IIAG…FMGL), 214-234 (FIIG…EFGI), and 236-256 (FIQA…SLNL).

It belongs to the ATPase A chain family. In terms of assembly, F-type ATPases have 2 components, CF(1) - the catalytic core - and CF(0) - the membrane proton channel. CF(1) has five subunits: alpha(3), beta(3), gamma(1), delta(1), epsilon(1). CF(0) has three main subunits: a, b and c.

It localises to the mitochondrion inner membrane. Mitochondrial membrane ATP synthase (F(1)F(0) ATP synthase or Complex V) produces ATP from ADP in the presence of a proton gradient across the membrane which is generated by electron transport complexes of the respiratory chain. F-type ATPases consist of two structural domains, F(1) - containing the extramembraneous catalytic core and F(0) - containing the membrane proton channel, linked together by a central stalk and a peripheral stalk. During catalysis, ATP synthesis in the catalytic domain of F(1) is coupled via a rotary mechanism of the central stalk subunits to proton translocation. Key component of the proton channel; it may play a direct role in the translocation of protons across the membrane. The sequence is that of ATP synthase subunit a (atp6) from Schizosaccharomyces pombe (strain 972 / ATCC 24843) (Fission yeast).